Here is a 345-residue protein sequence, read N- to C-terminus: Small ribosomal subunit biogenesis GTPase RsgA (345 aa).

The tract at residues 1–36 (MSKNKLSKGQERRVQANHQRRLQQRERGAAHWDDQP) is disordered. A compositionally biased stretch (basic and acidic residues) spans 23-34 (QQRERGAAHWDD). The region spanning 103-273 (RSVLTRPDVY…LIDSPGVREL (171 aa)) is the CP-type G domain. Residues 159–162 (NKID) and 213–221 (GQSGVGKSS) each bind GTP. The Zn(2+) site is built by cysteine 297, cysteine 302, histidine 304, and cysteine 310.

Belongs to the TRAFAC class YlqF/YawG GTPase family. RsgA subfamily. In terms of assembly, monomer. Associates with 30S ribosomal subunit, binds 16S rRNA. Zn(2+) serves as cofactor.

The protein resides in the cytoplasm. One of several proteins that assist in the late maturation steps of the functional core of the 30S ribosomal subunit. Helps release RbfA from mature subunits. May play a role in the assembly of ribosomal proteins into the subunit. Circularly permuted GTPase that catalyzes slow GTP hydrolysis, GTPase activity is stimulated by the 30S ribosomal subunit. The polypeptide is Small ribosomal subunit biogenesis GTPase RsgA (Sodalis glossinidius (strain morsitans)).